The sequence spans 931 residues: Protocadherin gamma-B2 (931 aa).

Positions 1–30 (MKASSGRCGLVRWLQVLLPFLLSLFPGALP) are cleaved as a signal peptide. 6 Cadherin domains span residues 31-133 (VQIR…TPLF), 134-242 (KQTK…PPVF), 243-347 (SQDV…APEV), 348-452 (IVTS…APVF), 453-562 (QQTS…APRV), and 570-675 (DGSA…LPDL). The Extracellular portion of the chain corresponds to 31-691 (VQIRYSIPEE…SDPQAELQFY (661 aa)). N-linked (GlcNAc...) asparagine glycans are attached at residues asparagine 419 and asparagine 545. A helical transmembrane segment spans residues 692 to 712 (LVVALALISVLFFLAVILAIS). Topologically, residues 713–931 (LRLRRSSRSD…KKKSGKKEKK (219 aa)) are cytoplasmic. Disordered regions lie at residues 814 to 840 (DWRF…WPNN) and 901 to 931 (ATLT…KEKK). A compositionally biased stretch (polar residues) spans 815–840 (WRFSQAQRPGTSGSQNGDDTGTWPNN). Residues 921-931 (NKKKSGKKEKK) show a composition bias toward basic residues.

It localises to the cell membrane. Its function is as follows. Potential calcium-dependent cell-adhesion protein. May be involved in the establishment and maintenance of specific neuronal connections in the brain. This Pan troglodytes (Chimpanzee) protein is Protocadherin gamma-B2 (PCDHGB2).